An 87-amino-acid polypeptide reads, in one-letter code: UPF0250 protein BCc_307 (87 aa).

This sequence belongs to the UPF0250 family.

The polypeptide is UPF0250 protein BCc_307 (Buchnera aphidicola subsp. Cinara cedri (strain Cc)).